The sequence spans 232 residues: Phosphoribosylformylglycinamidine synthase subunit PurQ (232 aa).

Positions 2 to 232 (KIAILQFGGT…SMVDYITENF (231 aa)) constitute a Glutamine amidotransferase type-1 domain. Cys-86 acts as the Nucleophile in catalysis. Residues His-203 and Glu-205 contribute to the active site.

As to quaternary structure, part of the FGAM synthase complex composed of 1 PurL, 1 PurQ and 2 PurS subunits.

The protein resides in the cytoplasm. The catalysed reaction is N(2)-formyl-N(1)-(5-phospho-beta-D-ribosyl)glycinamide + L-glutamine + ATP + H2O = 2-formamido-N(1)-(5-O-phospho-beta-D-ribosyl)acetamidine + L-glutamate + ADP + phosphate + H(+). It catalyses the reaction L-glutamine + H2O = L-glutamate + NH4(+). It functions in the pathway purine metabolism; IMP biosynthesis via de novo pathway; 5-amino-1-(5-phospho-D-ribosyl)imidazole from N(2)-formyl-N(1)-(5-phospho-D-ribosyl)glycinamide: step 1/2. Part of the phosphoribosylformylglycinamidine synthase complex involved in the purines biosynthetic pathway. Catalyzes the ATP-dependent conversion of formylglycinamide ribonucleotide (FGAR) and glutamine to yield formylglycinamidine ribonucleotide (FGAM) and glutamate. The FGAM synthase complex is composed of three subunits. PurQ produces an ammonia molecule by converting glutamine to glutamate. PurL transfers the ammonia molecule to FGAR to form FGAM in an ATP-dependent manner. PurS interacts with PurQ and PurL and is thought to assist in the transfer of the ammonia molecule from PurQ to PurL. The polypeptide is Phosphoribosylformylglycinamidine synthase subunit PurQ (Methanosarcina barkeri (strain Fusaro / DSM 804)).